Here is a 276-residue protein sequence, read N- to C-terminus: Proteasome chaperone 1 (276 aa).

This sequence belongs to the PSMG1 family. As to quaternary structure, component of the 20S proteasome chaperone. Forms a heterodimer with ADD66 that binds to proteasome precursors.

The protein resides in the cytoplasm. In terms of biological role, involved in 20S proteasome assembly. This Saccharomyces cerevisiae (strain ATCC 204508 / S288c) (Baker's yeast) protein is Proteasome chaperone 1 (PBA1).